Reading from the N-terminus, the 378-residue chain is Transcription elongation factor TFIIS (378 aa).

Met-1 is subject to N-acetylmethionine. Residues 10–89 (EGAKKAADAA…EIWKKVVIEE (80 aa)) form the TFIIS N-terminal domain. Residues 210–333 (VRDKIRELLV…DCERGLAAKA (124 aa)) form the TFIIS central domain. The segment at 336 to 376 (DQFKCGRCGQRKCTYYQMQTRSADEPMTTYVTCVNCDNHWK) adopts a TFIIS-type zinc-finger fold. Residues Cys-340, Cys-343, Cys-368, and Cys-371 each coordinate Zn(2+).

In terms of tissue distribution, expressed in roots, leaves and flowers.

It localises to the nucleus. Necessary for efficient RNA polymerase II transcription elongation past template-encoded arresting sites. Involved in the control of seed dormancy and germination. This chain is Transcription elongation factor TFIIS, found in Arabidopsis thaliana (Mouse-ear cress).